Reading from the N-terminus, the 599-residue chain is Nucleoporin p58/p45 (599 aa).

5 tandem repeats follow at residues 7-8, 30-31, 44-45, 63-64, and 68-69. A 14 X 2 AA repeats of F-G region spans residues 7 to 579; it reads FGSGTLGSTT…VSNPASAGFG (573 aa). The interval 213–247 is disordered; that stretch reads NEGLGGIDFSSSSDKKSDKTGTRPEDSKALKDENL. Basic and acidic residues predominate over residues 225 to 246; that stretch reads SDKKSDKTGTRPEDSKALKDEN. 2 coiled-coil regions span residues 256–276 and 314–381; these read ENLQKFVKEQKQVQEEISRMS and ETAQ…SHIT. Threonine 331 carries the phosphothreonine modification. A run of 9 repeats spans residues 488–489, 492–493, 513–514, 519–520, 529–530, 531–532, 545–546, 568–569, and 578–579. The tract at residues 579 to 599 is disordered; that stretch reads GTGGQLLQLKKPPAGNKRGKR.

It belongs to the NUP58 family. Component of the p62 complex, a complex at least composed of NUP62, NUP54, and NUP58. Interacts with NUTF2. Interacts with SRP1-alpha and Importin p97 proteins when they are together, but not with SRP1-alpha protein alone. O-glycosylated.

The protein resides in the nucleus. It localises to the nuclear pore complex. It is found in the nucleus membrane. In terms of biological role, component of the nuclear pore complex, a complex required for the trafficking across the nuclear membrane. The protein is Nucleoporin p58/p45 of Homo sapiens (Human).